The chain runs to 122 residues: Large ribosomal subunit protein bL12 (122 aa).

It belongs to the bacterial ribosomal protein bL12 family. In terms of assembly, homodimer. Part of the ribosomal stalk of the 50S ribosomal subunit. Forms a multimeric L10(L12)X complex, where L10 forms an elongated spine to which 2 to 4 L12 dimers bind in a sequential fashion. Binds GTP-bound translation factors.

Its function is as follows. Forms part of the ribosomal stalk which helps the ribosome interact with GTP-bound translation factors. Is thus essential for accurate translation. The protein is Large ribosomal subunit protein bL12 of Pseudomonas aeruginosa (strain LESB58).